The chain runs to 491 residues: Aspartyl/glutamyl-tRNA(Asn/Gln) amidotransferase subunit B (491 aa).

The protein belongs to the GatB/GatE family. GatB subfamily. As to quaternary structure, heterotrimer of A, B and C subunits.

The enzyme catalyses L-glutamyl-tRNA(Gln) + L-glutamine + ATP + H2O = L-glutaminyl-tRNA(Gln) + L-glutamate + ADP + phosphate + H(+). It carries out the reaction L-aspartyl-tRNA(Asn) + L-glutamine + ATP + H2O = L-asparaginyl-tRNA(Asn) + L-glutamate + ADP + phosphate + 2 H(+). In terms of biological role, allows the formation of correctly charged Asn-tRNA(Asn) or Gln-tRNA(Gln) through the transamidation of misacylated Asp-tRNA(Asn) or Glu-tRNA(Gln) in organisms which lack either or both of asparaginyl-tRNA or glutaminyl-tRNA synthetases. The reaction takes place in the presence of glutamine and ATP through an activated phospho-Asp-tRNA(Asn) or phospho-Glu-tRNA(Gln). This chain is Aspartyl/glutamyl-tRNA(Asn/Gln) amidotransferase subunit B, found in Paraburkholderia phytofirmans (strain DSM 17436 / LMG 22146 / PsJN) (Burkholderia phytofirmans).